The primary structure comprises 432 residues: PC-esterase domain-containing protein 1B (432 aa).

Disordered stretches follow at residues 264–293 (EWIKKKKPGPRVEGPPQANRNHPALPLSPP) and 398–432 (RGFGRYRPRGPYTPWGQRPRPSKRRAPANPEPRPQ).

This sequence belongs to the PC-esterase family.

The sequence is that of PC-esterase domain-containing protein 1B from Homo sapiens (Human).